The primary structure comprises 233 residues: Orotidine 5'-phosphate decarboxylase (233 aa).

Substrate is bound by residues aspartate 9, lysine 31, 58 to 67, threonine 120, arginine 182, glutamine 191, glycine 211, and arginine 212; that span reads DLKLHDIPNT. Residue lysine 60 is the Proton donor of the active site.

The protein belongs to the OMP decarboxylase family. Type 1 subfamily. As to quaternary structure, homodimer.

It catalyses the reaction orotidine 5'-phosphate + H(+) = UMP + CO2. The protein operates within pyrimidine metabolism; UMP biosynthesis via de novo pathway; UMP from orotate: step 2/2. Catalyzes the decarboxylation of orotidine 5'-monophosphate (OMP) to uridine 5'-monophosphate (UMP). This Listeria innocua serovar 6a (strain ATCC BAA-680 / CLIP 11262) protein is Orotidine 5'-phosphate decarboxylase.